The following is a 165-amino-acid chain: MEKRIANIIYSSRWLMFPVYIGLAFGFVLLTVKFFQQIICVIPEILTMSESGLVLIVLSLIDIALVGGLLVMVMFSGYENFIAKMETTENKKRLSWMGTMDVNSIKNKVASSIVAISSVHLLRLFMDADKISDNKIMWCVVIHLTFVLSAFGMAYIDKMSKKHYS.

The next 3 helical transmembrane spans lie at 15–35 (LMFP…VKFF), 53–73 (LVLI…LVMV), and 136–156 (IMWC…MAYI).

The protein belongs to the UPF0114 family.

It localises to the cell membrane. The polypeptide is UPF0114 protein in repA1-repA2 intergenic region (Buchnera aphidicola subsp. Thelaxes suberi).